The sequence spans 420 residues: UDP-N-acetylglucosamine 1-carboxyvinyltransferase (420 aa).

22 to 23 contacts phosphoenolpyruvate; that stretch reads KN. UDP-N-acetyl-alpha-D-glucosamine is bound at residue R91. The active-site Proton donor is C115. C115 is modified (2-(S-cysteinyl)pyruvic acid O-phosphothioketal). Residues 120-124, 160-163, D305, and I327 contribute to the UDP-N-acetyl-alpha-D-glucosamine site; these read RPVDL and KVSV.

The protein belongs to the EPSP synthase family. MurA subfamily.

It localises to the cytoplasm. It catalyses the reaction phosphoenolpyruvate + UDP-N-acetyl-alpha-D-glucosamine = UDP-N-acetyl-3-O-(1-carboxyvinyl)-alpha-D-glucosamine + phosphate. The protein operates within cell wall biogenesis; peptidoglycan biosynthesis. In terms of biological role, cell wall formation. Adds enolpyruvyl to UDP-N-acetylglucosamine. This chain is UDP-N-acetylglucosamine 1-carboxyvinyltransferase, found in Erwinia tasmaniensis (strain DSM 17950 / CFBP 7177 / CIP 109463 / NCPPB 4357 / Et1/99).